The sequence spans 171 residues: N5-carboxyaminoimidazole ribonucleotide mutase (171 aa).

The substrate site is built by serine 10, aspartate 13, and arginine 40.

Belongs to the AIR carboxylase family. Class I subfamily.

The enzyme catalyses 5-carboxyamino-1-(5-phospho-D-ribosyl)imidazole + H(+) = 5-amino-1-(5-phospho-D-ribosyl)imidazole-4-carboxylate. Its pathway is purine metabolism; IMP biosynthesis via de novo pathway; 5-amino-1-(5-phospho-D-ribosyl)imidazole-4-carboxylate from 5-amino-1-(5-phospho-D-ribosyl)imidazole (N5-CAIR route): step 2/2. Functionally, catalyzes the conversion of N5-carboxyaminoimidazole ribonucleotide (N5-CAIR) to 4-carboxy-5-aminoimidazole ribonucleotide (CAIR). This chain is N5-carboxyaminoimidazole ribonucleotide mutase, found in Thermotoga maritima (strain ATCC 43589 / DSM 3109 / JCM 10099 / NBRC 100826 / MSB8).